The following is an 843-amino-acid chain: Excretory canal abnormal protein 6 (843 aa).

Disordered regions lie at residues 54–135, 568–601, 748–767, and 773–843; these read QLKD…EKKT, TLESSFTPPPPPPLESPTDSTSSKENESVKPAKT, TPLSRRMSAPVVRKPTMTAE, and TMKP…PKWV. 2 stretches are compositionally biased toward pro residues: residues 66–76 and 83–103; these read TPPPPPPPPPL and APPPPPPPPPPTLKAPPPPPI. One can recognise an FH2 domain in the interval 127-512; that stretch reads FLPKKEKKTK…KEEKKETQTT (386 aa). Polar residues-rich tracts occupy residues 776–792 and 819–830; these read PSVSTSARPSLINTSSH and IPQSPTVTSSAR.

The protein belongs to the formin homology family. In terms of tissue distribution, expressed in the excretory cell and mostly accumulates at the tip of the excretory cell canals.

The protein localises to the cytoplasm. It is found in the cytoskeleton. Constitutively active protein required for microtubule and F-actin growth, structural maintenance and organization during excretory cell tubulogenesis. The polypeptide is Excretory canal abnormal protein 6 (Caenorhabditis elegans).